The sequence spans 132 residues: Small ribosomal subunit protein uS8 (132 aa).

Belongs to the universal ribosomal protein uS8 family. In terms of assembly, part of the 30S ribosomal subunit. Contacts proteins S5 and S12.

One of the primary rRNA binding proteins, it binds directly to 16S rRNA central domain where it helps coordinate assembly of the platform of the 30S subunit. This Xanthomonas euvesicatoria pv. vesicatoria (strain 85-10) (Xanthomonas campestris pv. vesicatoria) protein is Small ribosomal subunit protein uS8.